Here is a 144-residue protein sequence, read N- to C-terminus: Peptide methionine sulfoxide reductase MsrB (144 aa).

Positions 5-128 (KEELRQRIGE…NSAALQFIPV (124 aa)) constitute a MsrB domain. The active-site Nucleophile is the Cys-117.

This sequence belongs to the MsrB Met sulfoxide reductase family.

The catalysed reaction is L-methionyl-[protein] + [thioredoxin]-disulfide + H2O = L-methionyl-(R)-S-oxide-[protein] + [thioredoxin]-dithiol. The protein is Peptide methionine sulfoxide reductase MsrB of Ligilactobacillus salivarius (strain UCC118) (Lactobacillus salivarius).